The sequence spans 499 residues: Maturase K (499 aa).

This sequence belongs to the intron maturase 2 family. MatK subfamily.

It is found in the plastid. The protein resides in the chloroplast. Usually encoded in the trnK tRNA gene intron. Probably assists in splicing its own and other chloroplast group II introns. In Gleditsia triacanthos (Common honey-locust), this protein is Maturase K.